A 189-amino-acid polypeptide reads, in one-letter code: Phomopsin biosynthesis cluster protein D (189 aa).

Belongs to the oryJ family.

Part of the gene cluster that mediates the biosynthesis of the phomopsins, a group of hexapeptide mycotoxins which infects lupins and causes lupinosis disease in livestock. The role of phomC within the phomopsins biosynthesis pathway has still to be determined. The pathway starts with the processing of the precursor phomA by several endopeptidases including kexin proteases as well as the cluster-specific S41 family peptidase phomP1 and the oligopeptidase phomG to produce 10 identical copies of the hexapeptide Tyr-Val-Ile-Pro-Ile-Asp. After being excised from the precursor peptide, the core peptides are cyclized and modified post-translationally by enzymes encoded within the gene cluster. The timing and order of proteolysis of the phomA precursor and PTMs are still unknown. Two tyrosinase-like enzymes, phomQ1 and phomQ2, catalyze the chlorination and hydroxylation of Tyr, respectively. PhomYb, is proposed to be involved in the construction of the macrocyclic structure. The other 4 ustYa family proteins may be involved in PTMs that generate the unique structure of phomopsin A. PhomYa is required for the hydroxylation of C-beta of Tyr. PhomYc, phomYd, and phomYe are responsible for the biosynthesis of 2,3-dehydroisoleucine (dIle), 2,3-dehydroaspartic acid (dAsp), and 3,4-dehydroproline (dPro), respectively. While dIle formation by phomYc is indispensable for the installation of dAsp by phomYd, the order of the other PTMs have not been elucidated yet. Most of the biosynthetic enzymes likely have broad substrate specificity, and thus, there might be a metabolic grid from a precursor to phomopsin A. The enzyme(s) responsible for the biosynthesis of 3,4-dehydrovaline (dVal) have also not been identified yet. Finally, phomM acts as an S-adenosylmethionine-dependent alpha-N-methyltransferase that catalyzes two successive N-methylation reactions, converting N-desmethyl-phomopsin A to phomopsin A and phomopsin A further to an N,N-dimethylated congener called phomopsin E. The protein is Phomopsin biosynthesis cluster protein D of Diaporthe leptostromiformis (Lupinosis disease fungus).